Here is a 451-residue protein sequence, read N- to C-terminus: PTS system galactitol-specific EIIC component (451 aa).

The PTS EIIC type-2 domain maps to 6 to 435 (MRYILDLGPT…IYLTGIFMTW (430 aa)). 10 consecutive transmembrane segments (helical) span residues 9–29 (ILDL…SKIL), 41–61 (LHIG…LDSI), 92–112 (ASQI…AMLL), 138–158 (LATG…AFVY), 218–238 (FGPF…IGIL), 305–325 (AVVS…VCVP), 329–349 (VLPF…VAVH), 357–377 (LISG…TIGL), 392–412 (GMVA…IQVF), and 415–435 (QNIP…FMTW).

In terms of assembly, forms a complex with one each of subunit of GatA, GatB and 2 subunits of GatC.

Its subcellular location is the cell inner membrane. The phosphoenolpyruvate-dependent sugar phosphotransferase system (PTS), a major carbohydrate active transport system, catalyzes the phosphorylation of incoming sugar substrates concomitant with their translocation across the cell membrane. The enzyme II complex composed of GatA, GatB and GatC is involved in galactitol transport. This is PTS system galactitol-specific EIIC component (gatC) from Escherichia coli O157:H7.